The primary structure comprises 41 residues: Photosystem I reaction center subunit IX (41 aa).

A helical transmembrane segment spans residues 7–27; it reads YLSTAPVLLTIWLTFTAGFII.

It belongs to the PsaJ family.

It is found in the plastid. The protein localises to the chloroplast thylakoid membrane. Functionally, may help in the organization of the PsaE and PsaF subunits. The chain is Photosystem I reaction center subunit IX from Phaeodactylum tricornutum (strain CCAP 1055/1).